Here is a 226-residue protein sequence, read N- to C-terminus: ATP synthase subunit a (226 aa).

Transmembrane regions (helical) follow at residues 17–37 (FSYF…AMMA), 79–99 (LVAT…LPGF), 105–125 (SLNL…FEGI), 134–154 (FAHF…IEIV), 176–196 (LFLM…AYVL), and 199–219 (FMAF…LAGA).

This sequence belongs to the ATPase A chain family. F-type ATPases have 2 components, CF(1) - the catalytic core - and CF(0) - the membrane proton channel. CF(1) has five subunits: alpha(3), beta(3), gamma(1), delta(1), epsilon(1). CF(0) has three main subunits: a(1), b(2) and c(9-12). The alpha and beta chains form an alternating ring which encloses part of the gamma chain. CF(1) is attached to CF(0) by a central stalk formed by the gamma and epsilon chains, while a peripheral stalk is formed by the delta and b chains.

It is found in the cell inner membrane. Key component of the proton channel; it plays a direct role in the translocation of protons across the membrane. In Campylobacter jejuni subsp. doylei (strain ATCC BAA-1458 / RM4099 / 269.97), this protein is ATP synthase subunit a.